The sequence spans 271 residues: 5'-nucleotidase SurE (271 aa).

A divalent metal cation-binding residues include D14, D15, S46, and N104.

The protein belongs to the SurE nucleotidase family. A divalent metal cation is required as a cofactor.

The protein resides in the cytoplasm. The catalysed reaction is a ribonucleoside 5'-phosphate + H2O = a ribonucleoside + phosphate. Functionally, nucleotidase that shows phosphatase activity on nucleoside 5'-monophosphates. The chain is 5'-nucleotidase SurE from Gloeothece citriformis (strain PCC 7424) (Cyanothece sp. (strain PCC 7424)).